Reading from the N-terminus, the 357-residue chain is MSILEIDGSIGEGGGQILRYALALSALTLKPIRVYNIRAKRDNPGLRPQHLTAVEVLKEVTGAEVENAKVGSMEILFKPTSRRSGEMEIDIGTAGSISLVLQAMLPVLLFAEGDSRARLKGGTNVPWSPPIDYIKHVFLYNISHMGVRANIEVVRRGHYPRGGGLVNVEVKRVEEALKPLMIVRRGRIRGFRIHSHCVKLPAHVAVRQCESARRILSGIFKEKITEEIETYPPDKDPHLGPGSGILIYVEAEPGIRLGSDSLGEKGKPAERVGEEAALILIEELETGMAFDRHMGDMLIPYLFLAKGTSRIGVSMITLHLLTAIEVGKLFFPEAKVEVDGELGKPGIITIQGVGYKP.

ATP-binding positions include Gln102 and 293–296; that span reads HMGD. His319 serves as the catalytic Tele-AMP-histidine intermediate.

Belongs to the RNA 3'-terminal cyclase family. Type 1 subfamily.

Its subcellular location is the cytoplasm. The catalysed reaction is a 3'-end 3'-phospho-ribonucleotide-RNA + ATP = a 3'-end 2',3'-cyclophospho-ribonucleotide-RNA + AMP + diphosphate. Catalyzes the conversion of 3'-phosphate to a 2',3'-cyclic phosphodiester at the end of RNA. The mechanism of action of the enzyme occurs in 3 steps: (A) adenylation of the enzyme by ATP; (B) transfer of adenylate to an RNA-N3'P to produce RNA-N3'PP5'A; (C) and attack of the adjacent 2'-hydroxyl on the 3'-phosphorus in the diester linkage to produce the cyclic end product. The biological role of this enzyme is unknown but it is likely to function in some aspects of cellular RNA processing. This chain is RNA 3'-terminal phosphate cyclase, found in Desulfurococcus amylolyticus (strain DSM 18924 / JCM 16383 / VKM B-2413 / 1221n) (Desulfurococcus kamchatkensis).